We begin with the raw amino-acid sequence, 512 residues long: Ribose import ATP-binding protein RbsA 2 (512 aa).

ABC transporter domains are found at residues 7–242 and 257–498; these read LEIR…VGRE and LGEP…SGIG. Residue 39 to 46 coordinates ATP; the sequence is GENGAGKS.

This sequence belongs to the ABC transporter superfamily. Ribose importer (TC 3.A.1.2.1) family. As to quaternary structure, the complex is composed of an ATP-binding protein (RbsA), two transmembrane proteins (RbsC) and a solute-binding protein (RbsB).

The protein resides in the cell inner membrane. It catalyses the reaction D-ribose(out) + ATP + H2O = D-ribose(in) + ADP + phosphate + H(+). Functionally, part of the ABC transporter complex RbsABC involved in ribose import. Responsible for energy coupling to the transport system. The sequence is that of Ribose import ATP-binding protein RbsA 2 from Rhizobium meliloti (strain 1021) (Ensifer meliloti).